We begin with the raw amino-acid sequence, 239 residues long: Transcription factor MYB10 (239 aa).

2 HTH myb-type domains span residues 11-63 (KSQV…INYL) and 64-118 (RPGL…KKRL). 2 consecutive DNA-binding regions (H-T-H motif) follow at residues 39–63 (WRSL…INYL) and 91–114 (WSKI…NTHL).

In terms of tissue distribution, expressed in cauline leaves and siliques.

Its subcellular location is the nucleus. Involved in metal ions homeostasis, including iron ions (Fe) acquisition, via the regulation of NAS4 and NAS2 genes expression. Necessary for plant survival in alkaline soil where iron availability is greatly restricted. Triggers tolerance to nickel (Ni) and zinc (Zn) ions. The chain is Transcription factor MYB10 from Arabidopsis thaliana (Mouse-ear cress).